The chain runs to 30 residues: Snaclec carinactivase-1 regulatory subunit 17 kDa chain (30 aa).

The region spanning 1–30 (DCLPGWSSHEGHCYKVFNQEMYWADAEKFC) is the C-type lectin domain. A disulfide bridge connects residues Cys-2 and Cys-13.

Belongs to the snaclec family. As to quaternary structure, heterodimer of a metalloproteinase subunit and a regulatory subunit comprising two polypeptides disulfide-linked (14 kDa and 17 kDa chains). Expressed by the venom gland.

The protein resides in the secreted. Calcium-dependent prothrombin activator. This protein may activate prothrombin via recognition by the regulatory subunit of the calcium ion bound conformation of its gamma-carboxyglutamic acid (GLA) domain, and the subsequent conversion of prothrombin to active thrombin is catalyzed by the catalytic subunit. This is Snaclec carinactivase-1 regulatory subunit 17 kDa chain from Echis carinatus (Saw-scaled viper).